A 20-amino-acid chain; its full sequence is Antimicrobial peptide EP-20 (20 aa).

Positions E1 to P20 are disordered.

Its subcellular location is the secreted. The synthetic peptide inhibits growth of fungus P.capsici and partially that of V.dahliae, F.graminearum and F.omysporum. The polypeptide is Antimicrobial peptide EP-20 (Xenorhabdus budapestensis).